The chain runs to 135 residues: ATP synthase epsilon chain, chloroplastic (135 aa).

The protein belongs to the ATPase epsilon chain family. As to quaternary structure, F-type ATPases have 2 components, CF(1) - the catalytic core - and CF(0) - the membrane proton channel. CF(1) has five subunits: alpha(3), beta(3), gamma(1), delta(1), epsilon(1). CF(0) has three main subunits: a, b and c.

It localises to the plastid. Its subcellular location is the chloroplast thylakoid membrane. Produces ATP from ADP in the presence of a proton gradient across the membrane. The sequence is that of ATP synthase epsilon chain, chloroplastic from Euglena gracilis.